Consider the following 234-residue polypeptide: Sugar fermentation stimulation protein homolog (234 aa).

This sequence belongs to the SfsA family.

The sequence is that of Sugar fermentation stimulation protein homolog from Shewanella pealeana (strain ATCC 700345 / ANG-SQ1).